A 574-amino-acid chain; its full sequence is DNA polymerase I (574 aa).

The 3'-5' exonuclease domain maps to 4 to 161; it reads EYVTGEEGLK…ELFPKMRDML (158 aa).

Belongs to the DNA polymerase type-A family.

The enzyme catalyses DNA(n) + a 2'-deoxyribonucleoside 5'-triphosphate = DNA(n+1) + diphosphate. The sequence is that of DNA polymerase I (polA) from Aquifex aeolicus (strain VF5).